Reading from the N-terminus, the 1353-residue chain is Adenylate cyclase type 9 (1353 aa).

Disordered regions lie at residues 1-27 and 49-71; these read MASP…DSNS and SISS…GGGG. Residues 1-117 lie on the Cytoplasmic side of the membrane; sequence MASPPHQQLL…CFPQTQRRFR (117 aa). A compositionally biased stretch (polar residues) spans 16–27; the sequence is EVSCDSSGDSNS. Residues 49–66 show a composition bias toward low complexity; sequence SISSSCSSSGDSGGVPRR. A helical transmembrane segment spans residues 118–138; that stretch reads YALFYIGFACLLWSIYFAVHM. At 139-141 the chain is on the extracellular side; it reads RSR. The chain crosses the membrane as a helical span at residues 142–162; it reads LIVMVAPALCFLLVCVGFFLF. The Cytoplasmic segment spans residues 163 to 171; that stretch reads TFTKLYARH. Residues 172–192 traverse the membrane as a helical segment; that stretch reads YAWTSLALTLLVFALTLAAQF. The Extracellular portion of the chain corresponds to 193 to 215; sequence QVLTPVSGRGDSSNLTATARPTD. A glycan (N-linked (GlcNAc...) asparagine) is linked at Asn206. The helical transmembrane segment at 216 to 235 threads the bilayer; sequence TCLSQVGSFSMCIEVLFLLY. Over 236–241 the chain is Cytoplasmic; that stretch reads TVMHLP. Residues 242–259 form a helical membrane-spanning segment; the sequence is LYLSLCLGVAYSVLFETF. Residues 260-280 lie on the Extracellular side of the membrane; it reads GYHFRDEACFPSPGAGALHWE. A helical membrane pass occupies residues 281–301; the sequence is LLSRGLLHGCIHAIGVHLFVM. The Cytoplasmic portion of the chain corresponds to 302-786; sequence SQVRSRSTFL…VKTFASPTFS (485 aa). Residues 349 to 375 are disordered; the sequence is QGDEESENSVKRHATSSPKNRKKKSSI. The span at 359-374 shows a compositional bias: basic residues; it reads KRHATSSPKNRKKKSS. The Guanylate cyclase 1 domain occupies 394–521; it reads SILFADIVGF…NDVNLANLME (128 aa). Mg(2+)-binding residues include Asp399, Ile400, and Asp443. ATP-binding positions include 399–404, 441–443, and Arg487; these read DIVGFT and LGD. Ser610 carries the post-translational modification Phosphoserine. Residues 642–684 are disordered; it reads EAGAEGGAPQNGCQDEHKNSTKASGGPNPKTQNGLLSPPQEEK. Phosphoserine occurs at positions 688, 691, and 706. A helical transmembrane segment spans residues 787 to 807; that stretch reads SLLDVFLSTTVFLTLSTTCFL. The Extracellular portion of the chain corresponds to 808–818; it reads KYEAATVPPPP. The helical transmembrane segment at 819–839 threads the bilayer; it reads AALAVFSAALLLEVLSLAVSI. Residues 840 to 867 are Cytoplasmic-facing; the sequence is RMVFFLEDVMACTKRLLEWIAGWLPRHC. The chain crosses the membrane as a helical span at residues 868–888; sequence IGAILVSLPALAVYSHVTSEY. Residues 889–891 are Extracellular-facing; it reads ETN. A helical membrane pass occupies residues 892-912; that stretch reads IHFPVFTGSAALIAVVHYCNF. Residues 913–920 are Cytoplasmic-facing; the sequence is CQLSSWMR. A helical transmembrane segment spans residues 921 to 941; the sequence is SSLATVVGAGPLLLLYVSLCP. At 942–975 the chain is on the extracellular side; sequence DSSVLTSPLDAVQNFSSERNPCNSSVPRDLRRPA. Asn955 and Asn964 each carry an N-linked (GlcNAc...) asparagine glycan. Residues 976-996 form a helical membrane-spanning segment; the sequence is SLIGQEVVLVFFLLLLLVWFL. Topologically, residues 997-1353 are cytoplasmic; the sequence is NREFEVSYRL…LTKLNVSKSV (357 aa). One can recognise a Guanylate cyclase 2 domain in the interval 1058 to 1198; the sequence is GVIFASIVNF…DTVNIASRMD (141 aa). Residues Lys1108, 1185-1187, 1192-1196, and Lys1232 each bind ATP; these read DIW and NIASR. Phosphoserine is present on residues Ser1257, Ser1259, Ser1295, and Ser1307. Polar residues predominate over residues 1292 to 1301; sequence SLGSDSSTQA. The disordered stretch occupies residues 1292-1326; the sequence is SLGSDSSTQAKDAHLSPKRPWKEPVKAEERGRFGK. Residues 1302–1326 are compositionally biased toward basic and acidic residues; sequence KDAHLSPKRPWKEPVKAEERGRFGK.

This sequence belongs to the adenylyl cyclase class-4/guanylyl cyclase family. The cofactor is Mg(2+). It depends on Mn(2+) as a cofactor. As to expression, detected in skeletal muscle, pancreas, lung, heart, kidney, liver, brain and placenta. Expressed in multiple cells of the lung, with expression highest in airway smooth muscle.

It is found in the cell membrane. The catalysed reaction is ATP = 3',5'-cyclic AMP + diphosphate. Its activity is regulated as follows. Insensitive to calcium/calmodulin, forskolin and somatostatin. Stimulated by beta-adrenergic receptor activation. Activity is down-regulated by calcium/calcineurin. Functionally, adenylyl cyclase that catalyzes the formation of the signaling molecule cAMP in response to activation of G protein-coupled receptors. Contributes to signaling cascades activated by CRH (corticotropin-releasing factor), corticosteroids and beta-adrenergic receptors. This Homo sapiens (Human) protein is Adenylate cyclase type 9 (ADCY9).